A 292-amino-acid polypeptide reads, in one-letter code: MPKIAQIFNNNVALVDLDNRGQAVVRGRGIAFQKRRGDVIPTKQIEKIFYLANETSRQNLYFLLKNIPIDVVTTTYEIIDVAQKQYRLKVLDYIYITLSDHIYEAYKRYQAGTYQETMVPDFHIQYPAEYAVAKQALQIIATNLGVQFPQSEIKNLALHFINASGEDDGEQVFGKSNEASLSQLVQEVLKRHHITRSHSNGNYYDRFMIHLQYLIDRLQRVDTYAVTIVPEVATELKQNYPQSYKIASEIFDEIKDQLYRSMSEDERLYFIIHIQRLINEAPAQNHSQNDSL.

PRD domains lie at 66–170 (NIPI…DDGE) and 172–284 (VFGK…APAQ).

Belongs to the transcriptional antiterminator BglG family.

Its function is as follows. Mediates positive regulation of the lac operon by functioning as an antiterminator factor of transcription. This is Transcription antiterminator LacT (lacT) from Lacticaseibacillus casei (Lactobacillus casei).